A 425-amino-acid polypeptide reads, in one-letter code: CDP-diacylglycerol--serine O-phosphatidyltransferase 1 (425 aa).

The segment covering 1 to 16 (MEPNGYRKERRKEQHL) has biased composition (basic and acidic residues). The interval 1–23 (MEPNGYRKERRKEQHLGRMNGGG) is disordered. 9 helical membrane-spanning segments follow: residues 42 to 62 (TISL…ALDP), 79 to 99 (WAMI…TVLI), 105 to 125 (IWRL…FLLF), 197 to 217 (PLLW…RHML), 227 to 247 (SIVL…MYTV), 296 to 316 (FIQV…TFFL), 321 to 341 (WIPP…LIAI), 361 to 381 (GAFC…CIKF), and 390 to 410 (MPLW…AFLL).

The protein belongs to the CDP-alcohol phosphatidyltransferase class-I family. Expressed in trichomes, leaf veins and root vasculature.

It localises to the endoplasmic reticulum membrane. The protein localises to the nucleus envelope. The enzyme catalyses a CDP-1,2-diacyl-sn-glycerol + L-serine = a 1,2-diacyl-sn-glycero-3-phospho-L-serine + CMP + H(+). It participates in phospholipid metabolism; phosphatidylethanolamine biosynthesis; phosphatidylethanolamine from CDP-diacylglycerol: step 1/2. Its function is as follows. Catalyzes a base-exchange reaction in which the polar head group of phosphatidylethanolamine (PE) or phosphatidylcholine (PC) is replaced by L-serine. Is essential for phosphatidylserine (PS) biosynthesis and PE seems to be the most plausible substrate. Plays an important role in microspore maturation. This chain is CDP-diacylglycerol--serine O-phosphatidyltransferase 1 (PSS1), found in Arabidopsis thaliana (Mouse-ear cress).